The primary structure comprises 371 residues: 4-hydroxy-3-methylbut-2-en-1-yl diphosphate synthase (flavodoxin) (371 aa).

Residues cysteine 270, cysteine 273, cysteine 305, and glutamate 312 each contribute to the [4Fe-4S] cluster site.

Belongs to the IspG family. It depends on [4Fe-4S] cluster as a cofactor.

It carries out the reaction (2E)-4-hydroxy-3-methylbut-2-enyl diphosphate + oxidized [flavodoxin] + H2O + 2 H(+) = 2-C-methyl-D-erythritol 2,4-cyclic diphosphate + reduced [flavodoxin]. Its pathway is isoprenoid biosynthesis; isopentenyl diphosphate biosynthesis via DXP pathway; isopentenyl diphosphate from 1-deoxy-D-xylulose 5-phosphate: step 5/6. Functionally, converts 2C-methyl-D-erythritol 2,4-cyclodiphosphate (ME-2,4cPP) into 1-hydroxy-2-methyl-2-(E)-butenyl 4-diphosphate. The polypeptide is 4-hydroxy-3-methylbut-2-en-1-yl diphosphate synthase (flavodoxin) (Shewanella denitrificans (strain OS217 / ATCC BAA-1090 / DSM 15013)).